Here is a 539-residue protein sequence, read N- to C-terminus: Phosphoenolpyruvate carboxykinase (ATP) (539 aa).

Substrate contacts are provided by R61, Y195, and K201. ATP-binding positions include K201, H220, and 238-246 (GLSGTGKTT). Residues K201 and H220 each coordinate Mn(2+). D259 lines the Mn(2+) pocket. ATP contacts are provided by E287, R325, and T450. A substrate-binding site is contributed by R325.

Belongs to the phosphoenolpyruvate carboxykinase (ATP) family. Mn(2+) serves as cofactor.

It is found in the cytoplasm. It carries out the reaction oxaloacetate + ATP = phosphoenolpyruvate + ADP + CO2. The protein operates within carbohydrate biosynthesis; gluconeogenesis. In terms of biological role, involved in the gluconeogenesis. Catalyzes the conversion of oxaloacetate (OAA) to phosphoenolpyruvate (PEP) through direct phosphoryl transfer between the nucleoside triphosphate and OAA. The chain is Phosphoenolpyruvate carboxykinase (ATP) from Methylorubrum populi (strain ATCC BAA-705 / NCIMB 13946 / BJ001) (Methylobacterium populi).